The chain runs to 357 residues: Aspartate carbamoyltransferase catalytic subunit (357 aa).

Over residues 1-17 (MSNSIDSQSIPTISPTD) the composition is skewed to polar residues. The interval 1 to 21 (MSNSIDSQSIPTISPTDYTKF) is disordered. Positions 97 and 98 each coordinate carbamoyl phosphate. An L-aspartate-binding site is contributed by Lys-125. The carbamoyl phosphate site is built by Arg-147, His-177, and Gln-180. Arg-211 and Arg-266 together coordinate L-aspartate. Residues Gly-307 and Pro-308 each contribute to the carbamoyl phosphate site.

The protein belongs to the aspartate/ornithine carbamoyltransferase superfamily. ATCase family. In terms of assembly, heterododecamer (2C3:3R2) of six catalytic PyrB chains organized as two trimers (C3), and six regulatory PyrI chains organized as three dimers (R2).

It catalyses the reaction carbamoyl phosphate + L-aspartate = N-carbamoyl-L-aspartate + phosphate + H(+). It participates in pyrimidine metabolism; UMP biosynthesis via de novo pathway; (S)-dihydroorotate from bicarbonate: step 2/3. In terms of biological role, catalyzes the condensation of carbamoyl phosphate and aspartate to form carbamoyl aspartate and inorganic phosphate, the committed step in the de novo pyrimidine nucleotide biosynthesis pathway. The protein is Aspartate carbamoyltransferase catalytic subunit of Psychrobacter arcticus (strain DSM 17307 / VKM B-2377 / 273-4).